The chain runs to 393 residues: Formate-dependent phosphoribosylglycinamide formyltransferase (393 aa).

N(1)-(5-phospho-beta-D-ribosyl)glycinamide is bound by residues 22–23 (EL) and Glu82. Residues Arg114, Lys155, 160-165 (SSGHGQ), 195-198 (EGFV), and Glu203 contribute to the ATP site. Positions 119–308 (RLAAEELGLP…EFALHARAIL (190 aa)) constitute an ATP-grasp domain. 2 residues coordinate Mg(2+): Glu267 and Glu279. Residues Asp286, Lys356, and 363–364 (RR) contribute to the N(1)-(5-phospho-beta-D-ribosyl)glycinamide site.

This sequence belongs to the PurK/PurT family. As to quaternary structure, homodimer.

The catalysed reaction is N(1)-(5-phospho-beta-D-ribosyl)glycinamide + formate + ATP = N(2)-formyl-N(1)-(5-phospho-beta-D-ribosyl)glycinamide + ADP + phosphate + H(+). The protein operates within purine metabolism; IMP biosynthesis via de novo pathway; N(2)-formyl-N(1)-(5-phospho-D-ribosyl)glycinamide from N(1)-(5-phospho-D-ribosyl)glycinamide (formate route): step 1/1. Functionally, involved in the de novo purine biosynthesis. Catalyzes the transfer of formate to 5-phospho-ribosyl-glycinamide (GAR), producing 5-phospho-ribosyl-N-formylglycinamide (FGAR). Formate is provided by PurU via hydrolysis of 10-formyl-tetrahydrofolate. In Pasteurella multocida (strain Pm70), this protein is Formate-dependent phosphoribosylglycinamide formyltransferase.